A 712-amino-acid polypeptide reads, in one-letter code: MSQEKQVFSIDLAGRQLTVETGQLAKQANGAVLVRYGDTAVLSTATASKEAKNVDFFPLTVNYEERLYAVGKIPGGFIKREGRPSEKAILASRLIDRPIRPLFADGFRNEVQVVSIVMSVDQDCSSEMAAMLGSSLALSISDIPFEGPIAGTTVGRINGEFVINPTVEQQEQSDIHLVVAGTKDAINMVEAGADQVPEETMLEAIMFGHDEIKRLIAFQEEIVQAVGKEKSEVKLYEVDADLNQAVREMAEKDMHSAIQVHEKHAREDAINEVKKRVIEHYEAQEADADTLGQVNEILYKIVKEEVRRLITVEKIRPDGRKGDEIRPLASEVGILSRTHGSGLFTRGQTQALSICTLGALGDVQILDGLGVEESKRFMHHYNFPSFSVGETRPMRGPGRREIGHGALGERALEPVIPSEKDFPYTVRLVSEVLESNGSTSQASICGSTLAMMDAGVPLKAPVAGIAMGLVKTGEHYTILSDIQGMEDHLGDMDFKVAGTAHGVTALQMDIKIDGLSREILEEALQQAKVGRVHILNHMLSVIAEPRTELSAYAPKIITMTINPDKIRDVIGPSGKQINKIIEETGVKIDIEQDGTVFISSINQEMNDKAKKIIEDIVREVQVGEIYEGKVKRVEKFGAFVELFSGKDGLVHISELALERVGKVEDVVKIGDVITVKVIEIDKQGRVNLSRKVLLKEEQEKEAAKEENKQEQQ.

The Mg(2+) site is built by Asp487 and Asp493. A KH domain is found at 554–613 (PKIITMTINPDKIRDVIGPSGKQINKIIEETGVKIDIEQDGTVFISSINQEMNDKAKKII). An S1 motif domain is found at 623-691 (GEIYEGKVKR…KQGRVNLSRK (69 aa)).

It belongs to the polyribonucleotide nucleotidyltransferase family. Mg(2+) serves as cofactor.

It is found in the cytoplasm. The catalysed reaction is RNA(n+1) + phosphate = RNA(n) + a ribonucleoside 5'-diphosphate. In terms of biological role, involved in mRNA degradation. Catalyzes the phosphorolysis of single-stranded polyribonucleotides processively in the 3'- to 5'-direction. This Bacillus cereus (strain 03BB102) protein is Polyribonucleotide nucleotidyltransferase.